Here is a 1257-residue protein sequence, read N- to C-terminus: Pesticidal crystal protein Cry12Aa (1257 aa).

Belongs to the delta endotoxin family.

In terms of biological role, endotoxin with nematicidal activity. The protein is Pesticidal crystal protein Cry12Aa (cry12Aa) of Bacillus thuringiensis.